Here is a 134-residue protein sequence, read N- to C-terminus: Small ribosomal subunit protein uS12 (134 aa).

The tract at residues 1-30 (MPTINQLVKHGREKVKEKSKSPALQGHPQK) is disordered. Aspartate 89 is subject to 3-methylthioaspartic acid. Positions 106–134 (GVENRRQSRSKYGAKRPKAGAAAGAKGKK) are disordered. Basic residues predominate over residues 112 to 123 (QSRSKYGAKRPK). The span at 124-134 (AGAAAGAKGKK) shows a compositional bias: low complexity.

The protein belongs to the universal ribosomal protein uS12 family. As to quaternary structure, part of the 30S ribosomal subunit. Contacts proteins S8 and S17. May interact with IF1 in the 30S initiation complex.

Functionally, with S4 and S5 plays an important role in translational accuracy. Interacts with and stabilizes bases of the 16S rRNA that are involved in tRNA selection in the A site and with the mRNA backbone. Located at the interface of the 30S and 50S subunits, it traverses the body of the 30S subunit contacting proteins on the other side and probably holding the rRNA structure together. The combined cluster of proteins S8, S12 and S17 appears to hold together the shoulder and platform of the 30S subunit. The polypeptide is Small ribosomal subunit protein uS12 (Fervidobacterium nodosum (strain ATCC 35602 / DSM 5306 / Rt17-B1)).